The primary structure comprises 207 residues: 2,3-bisphosphoglycerate-dependent phosphoglycerate mutase (207 aa).

Substrate contacts are provided by residues Arg-10–Asn-17, Thr-23–Gly-24, Arg-62, Glu-89–Tyr-92, Lys-100, Arg-116–Arg-117, and Gly-160–Asn-161. His-11 acts as the Tele-phosphohistidine intermediate in catalysis. Glu-89 acts as the Proton donor/acceptor in catalysis.

Belongs to the phosphoglycerate mutase family. BPG-dependent PGAM subfamily. As to quaternary structure, homodimer.

It carries out the reaction (2R)-2-phosphoglycerate = (2R)-3-phosphoglycerate. The protein operates within carbohydrate degradation; glycolysis; pyruvate from D-glyceraldehyde 3-phosphate: step 3/5. Functionally, catalyzes the interconversion of 2-phosphoglycerate and 3-phosphoglycerate. This Nitrobacter hamburgensis (strain DSM 10229 / NCIMB 13809 / X14) protein is 2,3-bisphosphoglycerate-dependent phosphoglycerate mutase.